The chain runs to 295 residues: uncharacterized protein (295 aa).

Residues 1–19 form the signal peptide; it reads MHKLLLIITVFFTFNVAQA.

This is an uncharacterized protein from Rickettsia prowazekii (strain Madrid E).